The chain runs to 119 residues: Beta-2-microglobulin (119 aa).

The first 20 residues, 1–20 (MARFVAVALLVLLSLSGLEA), serve as a signal peptide directing secretion. One can recognise an Ig-like C1-type domain in the interval 25 to 114 (PKIQVYSRHP…VTFSTPKTVK (90 aa)). C45 and C100 are joined by a disulfide.

The protein belongs to the beta-2-microglobulin family. As to quaternary structure, heterodimer of an alpha chain and a beta chain. Beta-2-microglobulin is the beta-chain of major histocompatibility complex class I molecules.

It localises to the secreted. Functionally, component of the class I major histocompatibility complex (MHC). Involved in the presentation of peptide antigens to the immune system. The chain is Beta-2-microglobulin (B2M) from Plecturocebus moloch (Dusky titi monkey).